The following is a 665-amino-acid chain: Potassium-transporting ATPase ATP-binding subunit (665 aa).

Helical transmembrane passes span M28 to F48, Y56 to M76, I207 to I227, and I244 to I264. D295 functions as the 4-aspartylphosphate intermediate in the catalytic mechanism. ATP is bound by residues D332, E336, F364–S371, and K382. Residues D501 and D505 each contribute to the Mg(2+) site. 3 consecutive transmembrane segments (helical) span residues Y570–L590, I596–L616, and V644–V664.

This sequence belongs to the cation transport ATPase (P-type) (TC 3.A.3) family. Type IA subfamily. As to quaternary structure, the system is composed of three essential subunits: KdpA, KdpB and KdpC.

Its subcellular location is the cell membrane. It catalyses the reaction K(+)(out) + ATP + H2O = K(+)(in) + ADP + phosphate + H(+). In terms of biological role, part of the high-affinity ATP-driven potassium transport (or Kdp) system, which catalyzes the hydrolysis of ATP coupled with the electrogenic transport of potassium into the cytoplasm. This subunit is responsible for energy coupling to the transport system and for the release of the potassium ions to the cytoplasm. In Thermoplasma acidophilum (strain ATCC 25905 / DSM 1728 / JCM 9062 / NBRC 15155 / AMRC-C165), this protein is Potassium-transporting ATPase ATP-binding subunit.